A 377-amino-acid polypeptide reads, in one-letter code: Dehydrogenase/reductase SDR family member 13 (377 aa).

The signal sequence occupies residues 1–25 (MEALLLGVGLLLGAYVLVYYNLVKA). S46 and I48 together coordinate NAD(+). S170 contributes to the substrate binding site. Residues Y197, K201, and S232 each contribute to the NAD(+) site. Y197 serves as the catalytic Proton acceptor. The interval 310-363 (LAGLGPGEDAESDEDSQPEDPGTPSSPSSPHPEEPTVSELYPSPQSSTDRSTVT) is disordered. The span at 317–327 (EDAESDEDSQP) shows a compositional bias: acidic residues. The span at 328-337 (EDPGTPSSPS) shows a compositional bias: low complexity. Residues 352–363 (SPQSSTDRSTVT) show a composition bias toward polar residues.

This sequence belongs to the short-chain dehydrogenases/reductases (SDR) family.

The protein localises to the secreted. Putative oxidoreductase. This chain is Dehydrogenase/reductase SDR family member 13 (DHRS13), found in Bos taurus (Bovine).